A 252-amino-acid polypeptide reads, in one-letter code: MERVLIVNADDFGLSKGQNYGIVEAYRNGVVTSTTALVNGEAIGHAAQLSRELPALGVGMHFVLTLGKPVSEMPGLTRDGLLGKWIWQMAEEDTLPLDEIAHELACQYQRFIDVFGREPTHLDSHHHVHMFPQIFPIVARFAAQRGIALRIDRQTVLNADDLPSDLRSTQGFSSEFYGEEITEACFLRILDASAHRGEASLEVMCHPAFVDNIIRQSAYCYPRLTELEVLTSASLKAAIAERGYRPGSFLDI.

2 residues coordinate Mg(2+): His61 and His125.

This sequence belongs to the YdjC deacetylase family. ChbG subfamily. In terms of assembly, homodimer. It depends on Mg(2+) as a cofactor.

It localises to the cytoplasm. It carries out the reaction N,N'-diacetylchitobiose + H2O = N-acetyl-beta-D-glucosaminyl-(1-&gt;4)-D-glucosamine + acetate. It catalyses the reaction diacetylchitobiose-6'-phosphate + H2O = N'-monoacetylchitobiose-6'-phosphate + acetate. The protein operates within glycan degradation; chitin degradation. In terms of biological role, involved in the degradation of chitin. ChbG is essential for growth on the acetylated chitooligosaccharides chitobiose and chitotriose but is dispensable for growth on cellobiose and chitosan dimer, the deacetylated form of chitobiose. Deacetylation of chitobiose-6-P and chitotriose-6-P is necessary for both the activation of the chb promoter by the regulatory protein ChbR and the hydrolysis of phosphorylated beta-glucosides by the phospho-beta-glucosidase ChbF. Catalyzes the removal of only one acetyl group from chitobiose-6-P to yield monoacetylchitobiose-6-P, the inducer of ChbR and the substrate of ChbF. The sequence is that of Chitooligosaccharide deacetylase from Salmonella schwarzengrund (strain CVM19633).